Consider the following 414-residue polypeptide: 2,3-diketo-5-methylthiopentyl-1-phosphate enolase (414 aa).

The active-site Proton acceptor is the lysine 99. Residues lysine 148, 174 to 177 (KDDE), histidine 265, glycine 338, and 360 to 361 (GG) each bind substrate. Residues lysine 174, aspartate 176, and glutamate 177 each coordinate Mg(2+). Lysine 174 carries the N6-carboxylysine modification.

Belongs to the RuBisCO large chain family. Type IV subfamily. In terms of assembly, homodimer. Requires Mg(2+) as cofactor.

The catalysed reaction is 5-methylsulfanyl-2,3-dioxopentyl phosphate = 2-hydroxy-5-methylsulfanyl-3-oxopent-1-enyl phosphate. It participates in amino-acid biosynthesis; L-methionine biosynthesis via salvage pathway; L-methionine from S-methyl-5-thio-alpha-D-ribose 1-phosphate: step 3/6. In terms of biological role, catalyzes the enolization of 2,3-diketo-5-methylthiopentyl-1-phosphate (DK-MTP-1-P) into 2-hydroxy-3-keto-5-methylthiopentenyl-1-phosphate (HK-MTPenyl-1-P). This chain is 2,3-diketo-5-methylthiopentyl-1-phosphate enolase, found in Bacillus cytotoxicus (strain DSM 22905 / CIP 110041 / 391-98 / NVH 391-98).